We begin with the raw amino-acid sequence, 90 residues long: MAEKFNLQDRFLNHLRVNKIEVKVYLVNGFQTKGFIRSFDSYTVLLESGNQQSLIYKHAISTIIPSSYVMLMPRKQETAQEAETSENEGS.

One can recognise a Sm domain in the interval 9–69 (DRFLNHLRVN…ISTIIPSSYV (61 aa)).

The protein belongs to the Hfq family. In terms of assembly, homohexamer.

In terms of biological role, RNA chaperone that binds small regulatory RNA (sRNAs) and mRNAs to facilitate mRNA translational regulation in response to envelope stress, environmental stress and changes in metabolite concentrations. Also binds with high specificity to tRNAs. This chain is RNA-binding protein Hfq, found in Thermotoga petrophila (strain ATCC BAA-488 / DSM 13995 / JCM 10881 / RKU-1).